Reading from the N-terminus, the 241-residue chain is MATNAKPVYKRILLKLSGEALQGTEGFGIDASILDRMAQEIKELVELGIQVGVVIGGGNLFRGAGLAKAGMNRVVGDHMGMLATVMNGLAMRDALHRAYVNARLMSAIPLNGVCDSYSWAEAISLLRNNRVVLLSAGTGNPFFTTDSAACLRGIEIEADVVLKATKVDGVFTADPAKDPTATMYEQLTYSEVLEKELKVMDLAAFTLARDHKLPIRVFNMNKPGALRRVVMGEKEGTLITE.

15–18 (KLSG) contacts ATP. Positions 23–28 (GTEGFG) are involved in allosteric activation by GTP. Gly-57 is a UMP binding site. ATP contacts are provided by Gly-58 and Arg-62. UMP-binding positions include Asp-77 and 138-145 (TGNPFFTT). The ATP site is built by Thr-165, Phe-171, and Asp-174.

This sequence belongs to the UMP kinase family. Homohexamer.

The protein resides in the cytoplasm. The catalysed reaction is UMP + ATP = UDP + ADP. It functions in the pathway pyrimidine metabolism; CTP biosynthesis via de novo pathway; UDP from UMP (UMPK route): step 1/1. Its activity is regulated as follows. Allosterically activated by GTP. Inhibited by UTP. Its function is as follows. Catalyzes the reversible phosphorylation of UMP to UDP. The polypeptide is Uridylate kinase (Shigella dysenteriae serotype 1 (strain Sd197)).